The following is a 307-amino-acid chain: Heme A synthase (307 aa).

The Cytoplasmic portion of the chain corresponds to 1-6 (MKFALR). The chain crosses the membrane as a helical span at residues 7–27 (LLSVITTFVMLIVLIGGALVT). The Extracellular portion of the chain corresponds to 28-65 (KTGSGLGCGRQWPLCHGRFFPEMNPASIIEWSHRMSTG). An intrachain disulfide couples Cys35 to Cys42. Glu57 is an active-site residue. His60 is a binding site for heme o. The helical transmembrane segment at 66 to 86 (VSTILVLALAVLCWKKISPVF) threads the bilayer. The Cytoplasmic portion of the chain corresponds to 87–92 (RETKFL). Residues 93 to 113 (VIMSIIFLLLQALLGALAVVF) traverse the membrane as a helical segment. The Extracellular segment spans residues 114–121 (GSNALVMA). A helical membrane pass occupies residues 122–142 (LHFGISLISFASVLLLALLVF). Heme o is bound at residue His123. Residues 143-161 (EATRSETKLVKPLHIGKKM) are Cytoplasmic-facing. Residues 162-182 (QFHIYGLITYTYIVVYTGAYV) traverse the membrane as a helical segment. Topologically, residues 183 to 216 (RHTKSSLACSVFPFCSKDGALPAYFNQWVQMSHR) are extracellular. Cys191 and Cys197 are joined by a disulfide. His215 is a binding site for heme b. Residues 217 to 237 (AAALLLFVWIFVAMFHAMKHY) traverse the membrane as a helical segment. Over 238–242 (KEQKQ) the chain is Cytoplasmic. Residues 243–263 (LYYGWIISAILITLQAISGVM) form a helical membrane-spanning segment. Residues 264–274 (SVYSQLALGYA) are Extracellular-facing. A helical membrane pass occupies residues 275 to 295 (LAHSFFISCLFGVLCYFCLLI). His277 is a heme b binding site. Residues 296 to 307 (ARFKYESKEPFK) are Cytoplasmic-facing.

It belongs to the COX15/CtaA family. Type 1 subfamily. As to quaternary structure, interacts with CtaB. Heme b is required as a cofactor.

Its subcellular location is the cell membrane. The catalysed reaction is Fe(II)-heme o + 2 A + H2O = Fe(II)-heme a + 2 AH2. The protein operates within porphyrin-containing compound metabolism; heme A biosynthesis; heme A from heme O: step 1/1. Functionally, catalyzes the conversion of heme O to heme A by two successive hydroxylations of the methyl group at C8. The first hydroxylation forms heme I, the second hydroxylation results in an unstable dihydroxymethyl group, which spontaneously dehydrates, resulting in the formyl group of heme A. The chain is Heme A synthase from Bacillus pumilus (strain SAFR-032).